The following is a 160-amino-acid chain: Ureidoglycolate lyase (160 aa).

It belongs to the ureidoglycolate lyase family. Homodimer. It depends on Ni(2+) as a cofactor.

It carries out the reaction (S)-ureidoglycolate = urea + glyoxylate. The protein operates within nitrogen metabolism; (S)-allantoin degradation. Functionally, catalyzes the catabolism of the allantoin degradation intermediate (S)-ureidoglycolate, generating urea and glyoxylate. Involved in the utilization of allantoin as nitrogen source. In Salmonella typhimurium (strain LT2 / SGSC1412 / ATCC 700720), this protein is Ureidoglycolate lyase.